Consider the following 424-residue polypeptide: Histidine--tRNA ligase (424 aa).

This sequence belongs to the class-II aminoacyl-tRNA synthetase family. As to quaternary structure, homodimer.

Its subcellular location is the cytoplasm. It catalyses the reaction tRNA(His) + L-histidine + ATP = L-histidyl-tRNA(His) + AMP + diphosphate + H(+). In Shewanella sediminis (strain HAW-EB3), this protein is Histidine--tRNA ligase.